The following is a 476-amino-acid chain: S-adenosylmethionine-dependent nucleotide dehydratase (476 aa).

Residues 1–168 (MKTKITLSGF…LTANEVADLI (168 aa)) are cytidylate kinase-like domain. 9 to 17 (GFAGTGKST) is an ATP binding site. One can recognise a Radical SAM core domain in the interval 176–400 (NAVSKIPSVN…HKDVETIVPE (225 aa)). The segment at 183 to 476 (SVNFHLWQPC…DLRKEEVSYE (294 aa)) is prokaryotic viperin domain. [4Fe-4S] cluster contacts are provided by C192, C196, and C199.

This sequence in the N-terminal section; belongs to the cytidylate kinase-like family. In the C-terminal section; belongs to the radical SAM superfamily. Viperin family. The cofactor is [4Fe-4S] cluster.

The enzyme catalyses GTP + AH2 + S-adenosyl-L-methionine = 3'-deoxy-3',4'-didehydro-GTP + 5'-deoxyadenosine + L-methionine + A + H2O + H(+). Expression of pVip60 in E.coli (strain MG1655) confers resistance to phage T7; prevents culture collapse upon infection. Catalyzes the conversion of guanosine triphosphate (GTP) to 3'-deoxy-3',4'-didehydro-GTP (ddhGTP), probably via a SAM-dependent radical mechanism. The modified nucleotide represses transcription from T7 RNA polymerase-directed genes (possibly by acting as chain terminators), strongly suggesting these nucleotides block viral polymerase transcription. Functionally, the N-terminus of the protein may generate NTP for use by the viperin domain. This is S-adenosylmethionine-dependent nucleotide dehydratase from Lacinutrix mariniflava (strain JCM 13824 / KCCM 42306 / AKS432).